Consider the following 155-residue polypeptide: MSRRGTAEKKTAKSDPIYRNRLVNMLVNRILKHGKKSLAYQIIYRAVKKIQQKTETNPLSVLRQAIRGVTPNITVKARRVGGSTHQVPIEIGSTQGKALAVRWLLAASRKRPGRDMAFKLSSELVDAAKGSGDAIRKKEETLRMAEANRAFAHFR.

The protein belongs to the universal ribosomal protein uS7 family. Part of the 30S ribosomal subunit.

It is found in the plastid. The protein resides in the chloroplast. One of the primary rRNA binding proteins, it binds directly to 16S rRNA where it nucleates assembly of the head domain of the 30S subunit. The protein is Small ribosomal subunit protein uS7cz/uS7cy (rps7-A) of Ipomoea purpurea (Common morning glory).